The following is a 154-amino-acid chain: Urease accessory protein UreE (154 aa).

This sequence belongs to the UreE family.

It localises to the cytoplasm. In terms of biological role, involved in urease metallocenter assembly. Binds nickel. Probably functions as a nickel donor during metallocenter assembly. In Rhizobium meliloti (strain 1021) (Ensifer meliloti), this protein is Urease accessory protein UreE.